Reading from the N-terminus, the 90-residue chain is Acylphosphatase (90 aa).

The Acylphosphatase-like domain maps to 4 to 90 (CVRVRVSGRV…KGHDDFKIIY (87 aa)). Catalysis depends on residues Arg19 and Asn37.

Belongs to the acylphosphatase family.

It carries out the reaction an acyl phosphate + H2O = a carboxylate + phosphate + H(+). This is Acylphosphatase (acyP) from Methanothrix thermoacetophila (strain DSM 6194 / JCM 14653 / NBRC 101360 / PT) (Methanosaeta thermophila).